The sequence spans 206 residues: Protein-methionine-sulfoxide reductase heme-binding subunit MsrQ (206 aa).

A run of 4 helical transmembrane segments spans residues 8–28, 82–102, 116–136, and 153–173; these read IVWLKVLLHLAGLLPFLWLVW, LWCFAWATLHLTSYALLELGI, PYLTLGIISWFILFALTLTST, and FVYLVAILAPIHYLWSVKILS.

The protein belongs to the MsrQ family. In terms of assembly, heterodimer of a catalytic subunit (MsrP) and a heme-binding subunit (MsrQ). FMN serves as cofactor. The cofactor is heme b.

Its subcellular location is the cell inner membrane. In terms of biological role, part of the MsrPQ system that repairs oxidized periplasmic proteins containing methionine sulfoxide residues (Met-O), using respiratory chain electrons. Thus protects these proteins from oxidative-stress damage caused by reactive species of oxygen and chlorine generated by the host defense mechanisms. MsrPQ is essential for the maintenance of envelope integrity under bleach stress, rescuing a wide series of structurally unrelated periplasmic proteins from methionine oxidation. MsrQ provides electrons for reduction to the reductase catalytic subunit MsrP, using the quinone pool of the respiratory chain. The polypeptide is Protein-methionine-sulfoxide reductase heme-binding subunit MsrQ (Citrobacter koseri (strain ATCC BAA-895 / CDC 4225-83 / SGSC4696)).